The following is a 718-amino-acid chain: Protein Hook homolog 3 (718 aa).

Met1 carries the post-translational modification N-acetylmethionine. Residues 1–164 are sufficient for interaction with microtubules; it reads MFNVESVERV…QELMSKESPV (164 aa). The residue at position 6 (Ser6) is a Phosphoserine. Residues 10–126 enclose the Calponin-homology (CH) domain; it reads VELCESLLTW…RMLQLILGCA (117 aa). 2 coiled-coil regions span residues 168 to 433 and 462 to 663; these read HDAY…VQAQ and EIRE…MEEK. Position 238 is a phosphoserine (Ser238). The segment at 450-671 is sufficient for interaction with IIGP1; the sequence is SSDSLAAEIV…EKYIVSAWYN (222 aa). The required for association with Golgi stretch occupies residues 553-718; that stretch reads EKLHEANNEL…PGHVQPATAR (166 aa). The interval 682-718 is disordered; that stretch reads EDRLASTGSGQSFLARQRQATSTRRSYPGHVQPATAR. The span at 687 to 706 shows a compositional bias: polar residues; that stretch reads STGSGQSFLARQRQATSTRR. 2 positions are modified to phosphoserine: Ser693 and Ser707.

It belongs to the hook family. As to quaternary structure, self-associates. Component of the FTS/Hook/FHIP complex (FHF complex), composed of AKTIP/FTS, FHIP1B, and one or more members of the Hook family of proteins HOOK1, HOOK2, and HOOK3. May interact directly with AKTIP/FTS, HOOK1 and HOOK2. Associates with several subunits of the homotypic vesicular sorting complex (the HOPS complex) including VPS16 and VPS41; these interactions may be indirect. Interacts with IIGP1. Interacts with MSR1, and this association is stimulated by ligand binding to MSR1. Interacts with microtubules. Part of a tripartite complex with dynein and dynactin, acts an adapter linking the dynein motor complex and dynactin. Interacts with dynein intermediate chain and dynactin (DCTN1). Interacts with CCDC181. Interacts with LRGUK. (Microbial infection) Interacts with Salmonella typhimurium spiC. In terms of tissue distribution, expressed in brain, cerebellum, heart, intestine, kidney, liver, lung, skeletal muscle, spleen and stomach (at protein level).

It is found in the cytoplasm. It localises to the cytoskeleton. The protein localises to the golgi apparatus. Acts as an adapter protein linking the dynein motor complex to various cargos and converts dynein from a non-processive to a highly processive motor in the presence of dynactin. Facilitates the interaction between dynein and dynactin and activates dynein processivity (the ability to move along a microtubule for a long distance without falling off the track). Predominantly recruits 2 dyneins, which increases both the force and speed of the microtubule motor. Component of the FTS/Hook/FHIP complex (FHF complex). The FHF complex may function to promote vesicle trafficking and/or fusion via the homotypic vesicular protein sorting complex (the HOPS complex). May regulate clearance of endocytosed receptors such as MSR1. Participates in defining the architecture and localization of the Golgi complex. FHF complex promotes the distribution of AP-4 complex to the perinuclear area of the cell. Its function is as follows. (Microbial infection) Serves as a target for the spiC protein from Salmonella typhimurium, which inactivates it, leading to a strong alteration in cellular trafficking. The sequence is that of Protein Hook homolog 3 (Hook3) from Mus musculus (Mouse).